The sequence spans 142 residues: Transcriptional regulator MraZ (142 aa).

SpoVT-AbrB domains follow at residues 5-51 (SSAL…PRPE) and 77-120 (AQDV…DAAS).

It belongs to the MraZ family. In terms of assembly, forms oligomers.

The protein resides in the cytoplasm. Its subcellular location is the nucleoid. In Bordetella bronchiseptica (strain ATCC BAA-588 / NCTC 13252 / RB50) (Alcaligenes bronchisepticus), this protein is Transcriptional regulator MraZ.